A 406-amino-acid chain; its full sequence is 2,3-bisphosphoglycerate-independent phosphoglycerate mutase (406 aa).

Belongs to the BPG-independent phosphoglycerate mutase family. A-PGAM subfamily.

The enzyme catalyses (2R)-2-phosphoglycerate = (2R)-3-phosphoglycerate. Its pathway is carbohydrate degradation; glycolysis; pyruvate from D-glyceraldehyde 3-phosphate: step 3/5. Catalyzes the interconversion of 2-phosphoglycerate and 3-phosphoglycerate. In Methanococcus vannielii (strain ATCC 35089 / DSM 1224 / JCM 13029 / OCM 148 / SB), this protein is 2,3-bisphosphoglycerate-independent phosphoglycerate mutase.